The chain runs to 655 residues: UvrABC system protein C (655 aa).

The GIY-YIG domain occupies 16-95 (TDPGVYRFRD…IKEFAPRYNL (80 aa)). The UVR domain occupies 207–242 (KRFIGTLEKQMAEAVAELDYERAARLRDDVIALRKV).

This sequence belongs to the UvrC family. In terms of assembly, interacts with UvrB in an incision complex.

Its subcellular location is the cytoplasm. Functionally, the UvrABC repair system catalyzes the recognition and processing of DNA lesions. UvrC both incises the 5' and 3' sides of the lesion. The N-terminal half is responsible for the 3' incision and the C-terminal half is responsible for the 5' incision. The protein is UvrABC system protein C of Renibacterium salmoninarum (strain ATCC 33209 / DSM 20767 / JCM 11484 / NBRC 15589 / NCIMB 2235).